A 219-amino-acid polypeptide reads, in one-letter code: Small ribosomal subunit protein uS3 (219 aa).

In terms of domain architecture, KH type-2 spans 38–106 (IREYITARLK…RVHINILEVK (69 aa)).

Belongs to the universal ribosomal protein uS3 family. In terms of assembly, part of the 30S ribosomal subunit. Forms a tight complex with proteins S10 and S14.

Its function is as follows. Binds the lower part of the 30S subunit head. Binds mRNA in the 70S ribosome, positioning it for translation. The polypeptide is Small ribosomal subunit protein uS3 (Bacillus cytotoxicus (strain DSM 22905 / CIP 110041 / 391-98 / NVH 391-98)).